The primary structure comprises 273 residues: Dermonecrotic toxin LdSicTox-alphaIB3aii (273 aa).

Residue histidine 5 is part of the active site. Residues glutamate 25 and aspartate 27 each contribute to the Mg(2+) site. Catalysis depends on histidine 41, which acts as the Nucleophile. 2 disulfides stabilise this stretch: cysteine 45/cysteine 51 and cysteine 47/cysteine 190. Aspartate 85 contributes to the Mg(2+) binding site.

This sequence belongs to the arthropod phospholipase D family. Class II subfamily. Mg(2+) serves as cofactor. As to expression, expressed by the venom gland.

Its subcellular location is the secreted. It carries out the reaction an N-(acyl)-sphingosylphosphocholine = an N-(acyl)-sphingosyl-1,3-cyclic phosphate + choline. The catalysed reaction is an N-(acyl)-sphingosylphosphoethanolamine = an N-(acyl)-sphingosyl-1,3-cyclic phosphate + ethanolamine. It catalyses the reaction a 1-acyl-sn-glycero-3-phosphocholine = a 1-acyl-sn-glycero-2,3-cyclic phosphate + choline. The enzyme catalyses a 1-acyl-sn-glycero-3-phosphoethanolamine = a 1-acyl-sn-glycero-2,3-cyclic phosphate + ethanolamine. Its function is as follows. Dermonecrotic toxins cleave the phosphodiester linkage between the phosphate and headgroup of certain phospholipids (sphingolipid and lysolipid substrates), forming an alcohol (often choline) and a cyclic phosphate. This toxin acts on sphingomyelin (SM). It may also act on ceramide phosphoethanolamine (CPE), lysophosphatidylcholine (LPC) and lysophosphatidylethanolamine (LPE), but not on lysophosphatidylserine (LPS), and lysophosphatidylglycerol (LPG). It acts by transphosphatidylation, releasing exclusively cyclic phosphate products as second products. Induces dermonecrosis, hemolysis, increased vascular permeability, edema, inflammatory response, and platelet aggregation. This is Dermonecrotic toxin LdSicTox-alphaIB3aii from Loxosceles deserta (Desert recluse spider).